The chain runs to 89 residues: Small ribosomal subunit protein uS15 (89 aa).

Belongs to the universal ribosomal protein uS15 family. In terms of assembly, part of the 30S ribosomal subunit. Forms a bridge to the 50S subunit in the 70S ribosome, contacting the 23S rRNA.

In terms of biological role, one of the primary rRNA binding proteins, it binds directly to 16S rRNA where it helps nucleate assembly of the platform of the 30S subunit by binding and bridging several RNA helices of the 16S rRNA. Forms an intersubunit bridge (bridge B4) with the 23S rRNA of the 50S subunit in the ribosome. This Histophilus somni (strain 129Pt) (Haemophilus somnus) protein is Small ribosomal subunit protein uS15.